We begin with the raw amino-acid sequence, 468 residues long: Uronate isomerase (468 aa).

The protein belongs to the metallo-dependent hydrolases superfamily. Uronate isomerase family.

It catalyses the reaction D-glucuronate = D-fructuronate. The enzyme catalyses aldehydo-D-galacturonate = keto-D-tagaturonate. It functions in the pathway carbohydrate metabolism; pentose and glucuronate interconversion. The polypeptide is Uronate isomerase (Lachnospira eligens (strain ATCC 27750 / DSM 3376 / VPI C15-48 / C15-B4) (Eubacterium eligens)).